Consider the following 775-residue polypeptide: DNA polymerase (775 aa).

Belongs to the DNA polymerase type-B family.

It carries out the reaction DNA(n) + a 2'-deoxyribonucleoside 5'-triphosphate = DNA(n+1) + diphosphate. The chain is DNA polymerase (pol) from Thermococcus sp. (strain 9oN-7).